A 211-amino-acid polypeptide reads, in one-letter code: Imidazole glycerol phosphate synthase subunit HisH (211 aa).

The Glutamine amidotransferase type-1 domain occupies 3–211 (VIAVIDYDMG…VSQIKAPVLV (209 aa)). Cysteine 81 acts as the Nucleophile in catalysis. Residues histidine 186 and glutamate 188 contribute to the active site.

In terms of assembly, heterodimer of HisH and HisF.

Its subcellular location is the cytoplasm. The catalysed reaction is 5-[(5-phospho-1-deoxy-D-ribulos-1-ylimino)methylamino]-1-(5-phospho-beta-D-ribosyl)imidazole-4-carboxamide + L-glutamine = D-erythro-1-(imidazol-4-yl)glycerol 3-phosphate + 5-amino-1-(5-phospho-beta-D-ribosyl)imidazole-4-carboxamide + L-glutamate + H(+). It carries out the reaction L-glutamine + H2O = L-glutamate + NH4(+). It participates in amino-acid biosynthesis; L-histidine biosynthesis; L-histidine from 5-phospho-alpha-D-ribose 1-diphosphate: step 5/9. In terms of biological role, IGPS catalyzes the conversion of PRFAR and glutamine to IGP, AICAR and glutamate. The HisH subunit catalyzes the hydrolysis of glutamine to glutamate and ammonia as part of the synthesis of IGP and AICAR. The resulting ammonia molecule is channeled to the active site of HisF. This Cyanothece sp. (strain PCC 7425 / ATCC 29141) protein is Imidazole glycerol phosphate synthase subunit HisH.